Reading from the N-terminus, the 184-residue chain is GTP-binding protein Rheb (184 aa).

Lys-8 participates in a covalent cross-link: Glycyl lysine isopeptide (Lys-Gly) (interchain with G-Cter in ubiquitin). GDP is bound by residues Ser-16, Val-17, Gly-18, Lys-19, Ser-20, Ser-21, Val-32, and Asp-33. Ser-16 serves as a coordination point for GTP. GTP is bound by residues Gly-18, Lys-19, Ser-20, Ser-21, and Val-32. Position 20 (Ser-20) interacts with Mg(2+). 4 residues coordinate GTP: Tyr-35, Thr-38, Asn-119, and Asp-122. Residues 35-43 carry the Effector region motif; it reads YDPTIENTF. Thr-38 lines the Mg(2+) pocket. 2 residues coordinate GDP: Asn-119 and Asp-122. The residue at position 130 (Ser-130) is a Phosphoserine; by MAPKAPK5. A GDP-binding site is contributed by Ala-150. Ala-150 contributes to the GTP binding site. Cysteine methyl ester is present on Cys-181. Residue Cys-181 is the site of S-farnesyl cysteine attachment. The propeptide at 182 to 184 is removed in mature form; the sequence is SVM.

Belongs to the small GTPase superfamily. Rheb family. In terms of assembly, associates with the mTORC1 complex (MTOR, MLST8 and RPTOR) in a guanyl nucleotide-independent manner. Interacts with TSC2. Interacts with MCRS1; the interaction maintains RHEB at the lysosome in its active GTP-bound form and prevents its interaction with the mTORC1 complex inhibitor TSC2, ensuring activation of the mTORC1 complex by RHEB. Interacts (when prenylated) with PDE6D; this promotes release from membranes. Farnesylation is important for efficiently activating mTORC1-mediated signaling. In terms of processing, polyubiquitinated in response to amino acid, promoting its interaction with MTOR and mTORC1 activation. Deubiquitination by ATXN3 promotes recruitment of the TSC-TBC complex and RHEB inactivation by TSC2. Monoubiquitinated at Lys-8 by RNF152, promoting its association with the TSC-TBC complex. Deubiquitinated at Lys-8 by USP4, promoting mTORC1 activation. Post-translationally, phosphorylation by MAPKAPK5 impairs GTP-binding and inactivation. As to expression, ubiquitous. Highest levels observed in skeletal and cardiac muscle.

It localises to the endomembrane system. It is found in the lysosome membrane. Its subcellular location is the golgi apparatus membrane. The protein resides in the endoplasmic reticulum membrane. The protein localises to the cytoplasm. It localises to the cytosol. The enzyme catalyses GTP + H2O = GDP + phosphate + H(+). Its activity is regulated as follows. Alternates between an inactive form bound to GDP and an active form bound to GTP. Inactivated by the TSC-TBC complex via the GTPase activating protein (GAP) domain of TSC2. Autoinhibited by Tyr-35, which constrains the active site conformation, restricting the access of the catalytic Asp-65 to the nucleotide-binding pocket. Specifically inhibited by NR1 (4-bromo-6-(3,4-dichlorophenylthio)-1-(4-(dimethylcarbamoyl)benzyl)-1H-indole-2-carboxylic acid). Functionally, small GTPase that acts as an allosteric activator of the canonical mTORC1 complex, an evolutionarily conserved central nutrient sensor that stimulates anabolic reactions and macromolecule biosynthesis to promote cellular biomass generation and growth. In response to nutrients, growth factors or amino acids, specifically activates the protein kinase activity of MTOR, the catalytic component of the mTORC1 complex: acts by causing a conformational change that allows the alignment of residues in the active site of MTOR, thereby enhancing the phosphorylation of ribosomal protein S6 kinase (RPS6KB1 and RPS6KB2) and EIF4EBP1 (4E-BP1). RHEB is also required for localization of the TSC-TBC complex to lysosomal membranes. In response to starvation, RHEB is inactivated by the TSC-TBC complex, preventing activation of mTORC1. Has low intrinsic GTPase activity. This is GTP-binding protein Rheb from Homo sapiens (Human).